The chain runs to 399 residues: Methylthioribose kinase (399 aa).

ATP-binding positions include asparagine 40, lysine 57, and 111 to 113 (EDL). Substrate is bound at residue aspartate 229. Residue 246 to 248 (DAE) participates in ATP binding. Arginine 344 lines the substrate pocket.

It belongs to the methylthioribose kinase family. Homodimer.

It catalyses the reaction 5-(methylsulfanyl)-D-ribose + ATP = 5-(methylsulfanyl)-alpha-D-ribose 1-phosphate + ADP + H(+). It participates in amino-acid biosynthesis; L-methionine biosynthesis via salvage pathway; S-methyl-5-thio-alpha-D-ribose 1-phosphate from S-methyl-5'-thioadenosine (hydrolase route): step 2/2. In terms of biological role, catalyzes the phosphorylation of methylthioribose into methylthioribose-1-phosphate. In Cronobacter sakazakii (strain ATCC BAA-894) (Enterobacter sakazakii), this protein is Methylthioribose kinase.